A 201-amino-acid polypeptide reads, in one-letter code: Ras-related protein Rab-1B (201 aa).

The residue at position 1 (methionine 1) is an N-acetylmethionine. Residues serine 17, glycine 18, valine 19, glycine 20, lysine 21, serine 22, cysteine 23, tyrosine 33, threonine 34, glutamate 35, serine 36, serine 39, and threonine 40 each coordinate GTP. Serine 22 is a binding site for Mg(2+). The short motif at 30-45 (DDTYTESYISTIGVDF) is the Switch 1 element. 2 residues coordinate Mg(2+): threonine 40 and aspartate 63. A switch 2 region; required for interaction with REP1/CHM region spans residues 64–83 (TAGQERFRTITSSYYRGAHG). Positions 65–80 (AGQERFRTITSSYYRG) match the Switch 2 motif. GTP is bound by residues glycine 66, asparagine 121, lysine 122, aspartate 124, serine 151, alanine 152, and lysine 153. Residues 174 to 201 (GPGAASGGERPNLKIDSTPVKPASGGCC) are disordered. S-geranylgeranyl cysteine attachment occurs at residues cysteine 200 and cysteine 201. Cysteine 201 is subject to Cysteine methyl ester.

Belongs to the small GTPase superfamily. Rab family. In terms of assembly, interacts with MICAL1 and MICAL2. Interacts (GTP-bound form) with MICALCL, MICAL1 and MILCAL3. Interacts with GDI1; the interaction requires the GDP-bound state. Interacts with CHM/REP1; the interaction requires the GDP-bound form and is necessary for prenylation by GGTase II. Interacts with RabGAP TBC1D20. Interacts (in GDP-bound form) with lipid phosphatase MTMR6 (via GRAM domain); the interaction regulates MTMR6 recruitment to the endoplasmic reticulum-Golgi intermediate compartment. Interacts (in GDP-bound form) with lipid phosphatase MTMR7. The cofactor is Mg(2+). Prenylated; by GGTase II, only after interaction of the substrate with Rab escort protein 1 (REP1).

It is found in the cytoplasm. Its subcellular location is the membrane. It localises to the preautophagosomal structure membrane. The protein resides in the perinuclear region. It carries out the reaction GTP + H2O = GDP + phosphate + H(+). With respect to regulation, regulated by guanine nucleotide exchange factors (GEFs) which promote the exchange of bound GDP for free GTP. Regulated by GTPase activating proteins (GAPs) including TBC1D20 which increases the GTP hydrolysis activity. Inhibited by GDP dissociation inhibitors (GDIs). Functionally, the small GTPases Rab are key regulators of intracellular membrane trafficking, from the formation of transport vesicles to their fusion with membranes. Rabs cycle between an inactive GDP-bound form and an active GTP-bound form that is able to recruit to membranes different set of downstream effectors directly responsible for vesicle formation, movement, tethering and fusion. Plays a role in the initial events of the autophagic vacuole development which take place at specialized regions of the endoplasmic reticulum. Regulates vesicular transport between the endoplasmic reticulum and successive Golgi compartments. Required to modulate the compacted morphology of the Golgi. Promotes the recruitment of lipid phosphatase MTMR6 to the endoplasmic reticulum-Golgi intermediate compartment. This Mus musculus (Mouse) protein is Ras-related protein Rab-1B (Rab1b).